Consider the following 569-residue polypeptide: Lysine--tRNA ligase (569 aa).

Mg(2+) is bound by residues glutamate 414 and glutamate 421.

This sequence belongs to the class-II aminoacyl-tRNA synthetase family. As to quaternary structure, homodimer. It depends on Mg(2+) as a cofactor.

The protein localises to the cytoplasm. It carries out the reaction tRNA(Lys) + L-lysine + ATP = L-lysyl-tRNA(Lys) + AMP + diphosphate. In Christiangramia forsetii (strain DSM 17595 / CGMCC 1.15422 / KT0803) (Gramella forsetii), this protein is Lysine--tRNA ligase.